The sequence spans 639 residues: Synaptotagmin-16 (639 aa).

Residues 95 to 119 show a composition bias toward polar residues; sequence NSDLQDSVQTASPTLGQQAEDSSSV. The interval 95-191 is disordered; sequence NSDLQDSVQT…SSESDEDVTK (97 aa). Residues 121-134 show a composition bias toward pro residues; the sequence is PPWPSKIPGAPKPQ. Residues 142–151 show a composition bias toward basic and acidic residues; the sequence is EEDHHSERQR. Residues 174–187 are compositionally biased toward acidic residues; it reads GDDEEPSTSSESDE. The C2 1 domain occupies 344–463; sequence KCGDLDVIFE…HPEGEMKVTL (120 aa). The tract at residues 470-496 is disordered; that stretch reads NLSSGESPLSPSVVSHSDSASSTQSLS. Low complexity predominate over residues 476-496; it reads SPLSPSVVSHSDSASSTQSLS. Residues 499-634 enclose the C2 2 domain; sequence GVPELLVGLS…SKGQQTCRWH (136 aa).

This sequence belongs to the synaptotagmin family. In terms of assembly, homodimer. Can also form heterodimers. In terms of tissue distribution, highly expressed in heart and testis. Moderately expressed in kidney.

May be involved in the trafficking and exocytosis of secretory vesicles in non-neuronal tissues. Is Ca(2+)-independent. The sequence is that of Synaptotagmin-16 (Syt16) from Mus musculus (Mouse).